A 3127-amino-acid polypeptide reads, in one-letter code: Probable polyketide synthase 33 (3127 aa).

A Ketosynthase family 3 (KS3) domain is found at 24-457 (SGDVAVVGIG…GSNVCLILSE (434 aa)). Catalysis depends on for beta-ketoacyl synthase activity residues C196, H335, and H380. The interval 660–693 (GVSADIIIGHSLGEISSAYCSGMIDFQTLCYLTY) is acyl/malonyl transferase. S670 serves as the catalytic For acyl/malonyl transferase activity. An N-terminal hotdog fold region spans residues 958–1080 (GPSIHSLGNN…GNFSLFKHNI (123 aa)). The 300-residue stretch at 958–1257 (GPSIHSLGNN…CTIVGSNPDS (300 aa)) folds into the PKS/mFAS DH domain. The Proton acceptor; for dehydratase activity role is filled by H992. The C-terminal hotdog fold stretch occupies residues 1096–1257 (NFTTISKQDF…CTIVGSNPDS (162 aa)). D1168 serves as the catalytic Proton donor; for dehydratase activity. A disordered region spans residues 1369–1394 (SNNNNNNNNNNNNNNNNNNNNKNNGY). Residues 1370 to 1394 (NNNNNNNNNNNNNNNNNNNNKNNGY) are compositionally biased toward low complexity. In terms of domain architecture, Carrier spans 2539–2616 (SNNEIIRSTI…QSIEIIKSAH (78 aa)). S2576 carries the post-translational modification O-(pantetheine 4'-phosphoryl)serine. A disordered region spans residues 2617-2659 (NKNNNNNNINNNNNNNNNNNNNNNNNNNNNNNNNNNNNNNNNN). Residues 2617 to 2671 (NKNNNNNNINNNNNNNNNNNNNNNNNNNNNNNNNNNNNNNNNNLVKKEQQSLDEF) adopt a coiled-coil conformation. The helical transmembrane segment at 2937 to 2957 (VLTLYNIPITIFIAILIIDIF) threads the bilayer.

Requires pantetheine 4'-phosphate as cofactor.

Its subcellular location is the membrane. Its function is as follows. Probable polyketide synthase. The chain is Probable polyketide synthase 33 (pks33) from Dictyostelium discoideum (Social amoeba).